The sequence spans 145 residues: D-aminoacyl-tRNA deacylase (145 aa).

A Gly-cisPro motif, important for rejection of L-amino acids motif is present at residues 137 to 138; sequence GP.

It belongs to the DTD family. In terms of assembly, homodimer.

It localises to the cytoplasm. The enzyme catalyses glycyl-tRNA(Ala) + H2O = tRNA(Ala) + glycine + H(+). It carries out the reaction a D-aminoacyl-tRNA + H2O = a tRNA + a D-alpha-amino acid + H(+). In terms of biological role, an aminoacyl-tRNA editing enzyme that deacylates mischarged D-aminoacyl-tRNAs. Also deacylates mischarged glycyl-tRNA(Ala), protecting cells against glycine mischarging by AlaRS. Acts via tRNA-based rather than protein-based catalysis; rejects L-amino acids rather than detecting D-amino acids in the active site. By recycling D-aminoacyl-tRNA to D-amino acids and free tRNA molecules, this enzyme counteracts the toxicity associated with the formation of D-aminoacyl-tRNA entities in vivo and helps enforce protein L-homochirality. This chain is D-aminoacyl-tRNA deacylase, found in Shewanella baltica (strain OS155 / ATCC BAA-1091).